The sequence spans 757 residues: Polyribonucleotide nucleotidyltransferase (757 aa).

Residues Asp-489 and Asp-495 each coordinate Mg(2+). One can recognise a KH domain in the interval 556–615; it reads PKILCYKIDKDVVHKVIGSGGKTIRGISSDTSAKIDIDQNNYVYIMADTEEALMEAKTRV. One can recognise an S1 motif domain in the interval 632 to 700; the sequence is GELYDGKIVS…SDGKIKLTMR (69 aa). The interval 702-757 is disordered; it reads DEDRVGSGGSSSSPKKRFGAHPRKNGKDNRSNNSERGFNERSGSAEGSSISRKRFF. The segment covering 715–725 has biased composition (basic residues); sequence PKKRFGAHPRK. Residues 732–751 show a composition bias toward polar residues; sequence SNNSERGFNERSGSAEGSSI.

This sequence belongs to the polyribonucleotide nucleotidyltransferase family. Mg(2+) serves as cofactor.

It localises to the cytoplasm. The catalysed reaction is RNA(n+1) + phosphate = RNA(n) + a ribonucleoside 5'-diphosphate. Its function is as follows. Involved in mRNA degradation. Catalyzes the phosphorolysis of single-stranded polyribonucleotides processively in the 3'- to 5'-direction. This chain is Polyribonucleotide nucleotidyltransferase, found in Neorickettsia sennetsu (strain ATCC VR-367 / Miyayama) (Ehrlichia sennetsu).